We begin with the raw amino-acid sequence, 361 residues long: Mannose-1-phosphate guanyltransferase (361 aa).

Belongs to the transferase hexapeptide repeat family.

It is found in the cytoplasm. It carries out the reaction alpha-D-mannose 1-phosphate + GTP + H(+) = GDP-alpha-D-mannose + diphosphate. It functions in the pathway nucleotide-sugar biosynthesis; GDP-alpha-D-mannose biosynthesis; GDP-alpha-D-mannose from alpha-D-mannose 1-phosphate (GTP route): step 1/1. In terms of biological role, involved in cell wall synthesis where it is required for glycosylation. Involved in cell cycle progression through cell-size checkpoint. This Eremothecium gossypii (strain ATCC 10895 / CBS 109.51 / FGSC 9923 / NRRL Y-1056) (Yeast) protein is Mannose-1-phosphate guanyltransferase (MPG1).